The chain runs to 577 residues: Arginine--tRNA ligase (577 aa).

Positions 122–132 (PNVAKEMHVGH) match the 'HIGH' region motif.

It belongs to the class-I aminoacyl-tRNA synthetase family. In terms of assembly, monomer.

The protein resides in the cytoplasm. The catalysed reaction is tRNA(Arg) + L-arginine + ATP = L-arginyl-tRNA(Arg) + AMP + diphosphate. In Histophilus somni (strain 129Pt) (Haemophilus somnus), this protein is Arginine--tRNA ligase.